We begin with the raw amino-acid sequence, 74 residues long: MTNVYSLDGLLVFALLFVCTCAYFRKVPRLRSWLLSEKKGVWGVFYKAAVIGSRLHLAVSISCIAMAFYVLFIK.

A signal peptide spans 1 to 22 (MTNVYSLDGLLVFALLFVCTCA). The Extracellular segment spans residues 23–52 (YFRKVPRLRSWLLSEKKGVWGVFYKAAVIG). A helical transmembrane segment spans residues 53 to 73 (SRLHLAVSISCIAMAFYVLFI). A topological domain (cytoplasmic) is located at residue lysine 74.

Belongs to the KISH family.

Its subcellular location is the golgi apparatus membrane. Involved in the early part of the secretory pathway. In Xenopus laevis (African clawed frog), this protein is Protein kish-B (tmem167b).